The primary structure comprises 248 residues: Adenosylcobinamide-GDP ribazoletransferase (248 aa).

A run of 8 helical transmembrane segments spans residues glutamate 3–isoleucine 23, serine 35–leucine 55, isoleucine 63–glycine 83, leucine 109–serine 129, leucine 135–isoleucine 155, phenylalanine 180–aspartate 199, leucine 200–serine 219, and aspartate 228–leucine 248.

The protein belongs to the CobS family. Mg(2+) is required as a cofactor.

The protein localises to the cell membrane. It catalyses the reaction alpha-ribazole + adenosylcob(III)inamide-GDP = adenosylcob(III)alamin + GMP + H(+). The enzyme catalyses alpha-ribazole 5'-phosphate + adenosylcob(III)inamide-GDP = adenosylcob(III)alamin 5'-phosphate + GMP + H(+). The protein operates within cofactor biosynthesis; adenosylcobalamin biosynthesis; adenosylcobalamin from cob(II)yrinate a,c-diamide: step 7/7. In terms of biological role, joins adenosylcobinamide-GDP and alpha-ribazole to generate adenosylcobalamin (Ado-cobalamin). Also synthesizes adenosylcobalamin 5'-phosphate from adenosylcobinamide-GDP and alpha-ribazole 5'-phosphate. The chain is Adenosylcobinamide-GDP ribazoletransferase from Caldanaerobacter subterraneus subsp. tengcongensis (strain DSM 15242 / JCM 11007 / NBRC 100824 / MB4) (Thermoanaerobacter tengcongensis).